A 227-amino-acid chain; its full sequence is 7-cyano-7-deazaguanine synthase (227 aa).

8–18 (FSGGQDSTTCL) contributes to the ATP binding site. Residues Cys-187, Cys-196, Cys-199, and Cys-202 each contribute to the Zn(2+) site.

This sequence belongs to the QueC family. The cofactor is Zn(2+).

It carries out the reaction 7-carboxy-7-deazaguanine + NH4(+) + ATP = 7-cyano-7-deazaguanine + ADP + phosphate + H2O + H(+). Its pathway is purine metabolism; 7-cyano-7-deazaguanine biosynthesis. Its function is as follows. Catalyzes the ATP-dependent conversion of 7-carboxy-7-deazaguanine (CDG) to 7-cyano-7-deazaguanine (preQ(0)). The sequence is that of 7-cyano-7-deazaguanine synthase from Aliivibrio fischeri (strain ATCC 700601 / ES114) (Vibrio fischeri).